Consider the following 194-residue polypeptide: Mitochondrial inner membrane protease ATP23 (194 aa).

Residues 1–20 (MEDAAAPNSGSEFNPGARRG) are disordered. His96 provides a ligand contact to Zn(2+). Glu97 is an active-site residue. His100 serves as a coordination point for Zn(2+).

Belongs to the peptidase M76 family.

It is found in the mitochondrion inner membrane. Has a dual role in the assembly of mitochondrial ATPase. Acts as a protease that removes the N-terminal 10 residues of mitochondrial ATPase CF(0) subunit 6 (ATP6) at the intermembrane space side. Also involved in the correct assembly of the membrane-embedded ATPase CF(0) particle, probably mediating association of ATP6 with the subunit 9 ring. The polypeptide is Mitochondrial inner membrane protease ATP23 (Arabidopsis thaliana (Mouse-ear cress)).